The chain runs to 310 residues: tRNA-cytidine(32) 2-sulfurtransferase (310 aa).

Residues 48–53 (SGGKDS) carry the PP-loop motif motif. [4Fe-4S] cluster contacts are provided by Cys123, Cys126, and Cys214.

The protein belongs to the TtcA family. Homodimer. Mg(2+) is required as a cofactor. The cofactor is [4Fe-4S] cluster.

The protein resides in the cytoplasm. It catalyses the reaction cytidine(32) in tRNA + S-sulfanyl-L-cysteinyl-[cysteine desulfurase] + AH2 + ATP = 2-thiocytidine(32) in tRNA + L-cysteinyl-[cysteine desulfurase] + A + AMP + diphosphate + H(+). The protein operates within tRNA modification. In terms of biological role, catalyzes the ATP-dependent 2-thiolation of cytidine in position 32 of tRNA, to form 2-thiocytidine (s(2)C32). The sulfur atoms are provided by the cysteine/cysteine desulfurase (IscS) system. This is tRNA-cytidine(32) 2-sulfurtransferase from Vibrio vulnificus (strain CMCP6).